The following is a 185-amino-acid chain: Ribosome-recycling factor (185 aa).

Belongs to the RRF family.

Its subcellular location is the cytoplasm. Responsible for the release of ribosomes from messenger RNA at the termination of protein biosynthesis. May increase the efficiency of translation by recycling ribosomes from one round of translation to another. The sequence is that of Ribosome-recycling factor from Streptococcus pneumoniae serotype 19F (strain G54).